A 462-amino-acid chain; its full sequence is Sugar transporter ERD6-like 12 (462 aa).

A run of 12 helical transmembrane segments spans residues 25–45, 62–82, 101–121, 124–144, 151–171, 179–199, 262–282, 297–317, 326–346, 358–378, 399–419, and 424–444; these read LLIF…AAIG, LAQF…GAIF, LFCI…WLDM, FLVG…IAEI, GAFT…VYYF, TLAI…FFIP, LTIG…GISS, IGMM…LILV, LMTS…AFGV, IFCF…MGAL, VTIA…FMLV, and GTFI…WCLV.

This sequence belongs to the major facilitator superfamily. Sugar transporter (TC 2.A.1.1) family.

It localises to the membrane. In terms of biological role, sugar transporter. This Arabidopsis thaliana (Mouse-ear cress) protein is Sugar transporter ERD6-like 12 (SUGTL5).